Here is a 545-residue protein sequence, read N- to C-terminus: Esterase-5B (545 aa).

Residues 1–19 form the signal peptide; the sequence is MYCEKLILLLGCFWISSSA. An intrachain disulfide couples Cys-84 to Cys-103. Asn-113 carries an N-linked (GlcNAc...) asparagine glycan. Residue Ser-207 is the Acyl-ester intermediate of the active site. The cysteines at positions 259 and 271 are disulfide-linked. N-linked (GlcNAc...) asparagine glycosylation is present at Asn-421. His-467 functions as the Charge relay system in the catalytic mechanism. N-linked (GlcNAc...) asparagine glycosylation is present at Asn-507. Cys-515 and Cys-536 form a disulfide bridge.

It belongs to the type-B carboxylesterase/lipase family. In terms of assembly, homodimer.

Its subcellular location is the secreted. It catalyses the reaction a carboxylic ester + H2O = an alcohol + a carboxylate + H(+). The chain is Esterase-5B (Est-5B) from Drosophila miranda (Fruit fly).